A 692-amino-acid polypeptide reads, in one-letter code: Elongation factor G (692 aa).

The tr-type G domain occupies 8-282; it reads ENTRNIGIMA…AVIDYLPSPL (275 aa). GTP contacts are provided by residues 17–24, 81–85, and 135–138; these read AHIDAGKT, DTPGH, and NKMD.

This sequence belongs to the TRAFAC class translation factor GTPase superfamily. Classic translation factor GTPase family. EF-G/EF-2 subfamily.

Its subcellular location is the cytoplasm. In terms of biological role, catalyzes the GTP-dependent ribosomal translocation step during translation elongation. During this step, the ribosome changes from the pre-translocational (PRE) to the post-translocational (POST) state as the newly formed A-site-bound peptidyl-tRNA and P-site-bound deacylated tRNA move to the P and E sites, respectively. Catalyzes the coordinated movement of the two tRNA molecules, the mRNA and conformational changes in the ribosome. The protein is Elongation factor G of Bacillus cereus (strain G9842).